A 773-amino-acid chain; its full sequence is Cellobiose dehydrogenase (773 aa).

Residues Met-1–Ser-18 form the signal peptide. Residue Gln-19 is modified to Pyrrolidone carboxylic acid. Positions Gln-19–Gly-208 are heme domain. Heme is bound by residues Met-83 and His-181. Positions Leu-203–Gly-227 are disordered. Residues Pro-210–Gly-227 show a composition bias toward low complexity. An oxidoreductase region spans residues Tyr-235–Pro-773. Asp-236 to Arg-265 contributes to the FAD binding site. His-707 functions as the Proton acceptor in the catalytic mechanism.

The protein in the C-terminal section; belongs to the GMC oxidoreductase family. FAD is required as a cofactor. The cofactor is heme.

The protein localises to the secreted. It carries out the reaction D-cellobiose + A = D-cellobiono-1,5-lactone + AH2. In terms of biological role, degrades both lignin and cellulose. Oxidizes cellobiose to cellobionolactone. In Phanerodontia chrysosporium (White-rot fungus), this protein is Cellobiose dehydrogenase (CDH-1).